The following is a 101-amino-acid chain: Gastrin (101 aa).

Positions 1-21 are cleaved as a signal peptide; the sequence is MPRLCVYMLVLVLALATFSEA. The tract at residues 23 to 101 is disordered; it reads WKPRSQLQDA…FGRRSAEEDQ (79 aa). Over residues 25 to 37 the composition is skewed to polar residues; that stretch reads PRSQLQDASSGPG. Tyr87 is subject to Sulfotyrosine. Phe92 carries the post-translational modification Phenylalanine amide. Residues 92 to 101 show a composition bias toward basic and acidic residues; sequence FGRRSAEEDQ. The residue at position 96 (Ser96) is a Phosphoserine. Positions 96 to 101 are excised as a propeptide; sequence SAEEDQ.

Belongs to the gastrin/cholecystokinin family. Post-translationally, sulfation enhances proteolytic processing, and blocks peptide degradation. Levels of sulfation differ between proteolytically-cleaved gastrins and between tissues. As to expression, abundantly expressed in the stomach and duodenum. Low levels in brain, ovary and pancreas.

It is found in the secreted. In terms of biological role, gastrin stimulates the stomach mucosa to produce and secrete hydrochloric acid and the pancreas to secrete its digestive enzymes. It also stimulates smooth muscle contraction and increases blood circulation and water secretion in the stomach and intestine. This is Gastrin (Gast) from Mus musculus (Mouse).